Reading from the N-terminus, the 257-residue chain is 3-deoxy-manno-octulosonate cytidylyltransferase (257 aa).

Belongs to the KdsB family.

It is found in the cytoplasm. It carries out the reaction 3-deoxy-alpha-D-manno-oct-2-ulosonate + CTP = CMP-3-deoxy-beta-D-manno-octulosonate + diphosphate. It participates in nucleotide-sugar biosynthesis; CMP-3-deoxy-D-manno-octulosonate biosynthesis; CMP-3-deoxy-D-manno-octulosonate from 3-deoxy-D-manno-octulosonate and CTP: step 1/1. It functions in the pathway bacterial outer membrane biogenesis; lipopolysaccharide biosynthesis. Functionally, activates KDO (a required 8-carbon sugar) for incorporation into bacterial lipopolysaccharide in Gram-negative bacteria. The chain is 3-deoxy-manno-octulosonate cytidylyltransferase from Xylella fastidiosa (strain 9a5c).